The primary structure comprises 834 residues: Ras GTPase-activating protein 3 (834 aa).

C2 domains lie at 1 to 112 (MAVE…DTWF) and 123 to 263 (VQGK…EAWY). Ala-2 is modified (N-acetylalanine). The residue at position 66 (Tyr-66) is a Phosphotyrosine. Residue Ser-77 is modified to Phosphoserine. A Phosphothreonine modification is found at Thr-110. The Ras-GAP domain maps to 346 to 561 (GRVVPFISAI…DAVKNFLDLI (216 aa)). The PH domain maps to 576-677 (ILLKEGFMIK…WIDILTKVSQ (102 aa)). The Btk-type zinc finger occupies 679 to 715 (NQKRLAVYHPSAYLNGHWLCCRASSDTAAGCSPCTGG). The Zn(2+) site is built by His-687, Cys-698, Cys-699, and Cys-709. Residues 806-834 (KYGSQEHPIGDKSFQSYIRQQSETPAHSM) are disordered. A phosphoserine mark is found at Ser-809 and Ser-833. Positions 818–834 (SFQSYIRQQSETPAHSM) are enriched in polar residues.

In terms of biological role, inhibitory regulator of the Ras-cyclic AMP pathway. May bind inositol tetrakisphosphate (IP4). The chain is Ras GTPase-activating protein 3 (RASA3) from Bos taurus (Bovine).